The sequence spans 430 residues: Gamma-glutamyl phosphate reductase (430 aa).

It belongs to the gamma-glutamyl phosphate reductase family.

It is found in the cytoplasm. The catalysed reaction is L-glutamate 5-semialdehyde + phosphate + NADP(+) = L-glutamyl 5-phosphate + NADPH + H(+). It functions in the pathway amino-acid biosynthesis; L-proline biosynthesis; L-glutamate 5-semialdehyde from L-glutamate: step 2/2. Functionally, catalyzes the NADPH-dependent reduction of L-glutamate 5-phosphate into L-glutamate 5-semialdehyde and phosphate. The product spontaneously undergoes cyclization to form 1-pyrroline-5-carboxylate. This is Gamma-glutamyl phosphate reductase from Methylococcus capsulatus (strain ATCC 33009 / NCIMB 11132 / Bath).